The following is a 305-amino-acid chain: Heme A synthase (305 aa).

Residues 1-6 lie on the Cytoplasmic side of the membrane; sequence MKKFLK. The chain crosses the membrane as a helical span at residues 7-27; it reads VWSVLTIICMTVVVFGGALVT. The Extracellular portion of the chain corresponds to 28 to 63; sequence KTGSADGCGNSWPLCNGQLVRLTDVTPEKLIEFMHR. C35 and C42 form a disulfide bridge. The active site involves E59. Heme o is bound at residue H62. The helical transmembrane segment at 64–84 threads the bilayer; it reads MTTGISSIFVIVLAICAWIYM. Topologically, residues 85-92 are cytoplasmic; sequence KNRRETKP. A helical membrane pass occupies residues 93 to 113; that stretch reads LAIIAVLFLIIQALMGMAAVV. The Extracellular segment spans residues 114–122; it reads WGQNPYIMA. The helical transmembrane segment at 123 to 143 threads the bilayer; the sequence is LHFGISIICYASIVLLALMIF. H124 lines the heme o pocket. The Cytoplasmic segment spans residues 144–160; the sequence is EVDRKFDARNLVMGTKL. The helical transmembrane segment at 161–181 threads the bilayer; that stretch reads RVNIYALTIYTYLAVYTGALV. Topologically, residues 182–212 are extracellular; that stretch reads RHEKASMAVPVWPFENGHFIMPTSVQDYVQY. A helical membrane pass occupies residues 213–233; sequence FHRLAAFILIVWLLYVTWLVF. A heme b-binding site is contributed by H214. Residues 234–240 are Cytoplasmic-facing; that stretch reads RDYRRYR. Residues 241-261 traverse the membrane as a helical segment; it reads VLTFSMVLSLVFIALQAVTGA. The Extracellular segment spans residues 262 to 271; sequence LSVYTGVNLY. Residues 272–292 form a helical membrane-spanning segment; it reads IALAHSLIITMLFALLCYLCL. H276 contacts heme b. Residues 293-305 are Cytoplasmic-facing; that stretch reads LASRSKSNRLRIK.

This sequence belongs to the COX15/CtaA family. Type 1 subfamily. Interacts with CtaB. It depends on heme b as a cofactor.

The protein localises to the cell membrane. It carries out the reaction Fe(II)-heme o + 2 A + H2O = Fe(II)-heme a + 2 AH2. The protein operates within porphyrin-containing compound metabolism; heme A biosynthesis; heme A from heme O: step 1/1. Functionally, catalyzes the conversion of heme O to heme A by two successive hydroxylations of the methyl group at C8. The first hydroxylation forms heme I, the second hydroxylation results in an unstable dihydroxymethyl group, which spontaneously dehydrates, resulting in the formyl group of heme A. In Listeria monocytogenes serovar 1/2a (strain ATCC BAA-679 / EGD-e), this protein is Heme A synthase.